The primary structure comprises 304 residues: Phospholipase A1 (304 aa).

A disulfide bridge links Cys-6 with Cys-90. An N-linked (GlcNAc...) asparagine glycan is attached at Asn-61. Ser-140 acts as the Nucleophile in catalysis. Asp-168 (charge relay system) is an active-site residue. 2 disulfide bridges follow: Cys-179–Cys-184 and Cys-222–Cys-231. His-233 functions as the Charge relay system in the catalytic mechanism. 3 cysteine pairs are disulfide-bonded: Cys-248-Cys-272, Cys-249-Cys-297, and Cys-265-Cys-270.

Belongs to the AB hydrolase superfamily. Lipase family. In terms of tissue distribution, expressed by the venom gland.

Its subcellular location is the secreted. The catalysed reaction is a 1,2-diacyl-sn-glycero-3-phosphocholine + H2O = a 2-acyl-sn-glycero-3-phosphocholine + a fatty acid + H(+). Its function is as follows. Catalyzes the hydrolysis of phosphatidylcholine with phospholipase A1 activity. May act as an allergen and induce hemolytic activity. The polypeptide is Phospholipase A1 (Vespa velutina (Asian yellow-legged hornet)).